Consider the following 263-residue polypeptide: Lens fiber major intrinsic protein (263 aa).

Residues 1-9 are Cytoplasmic-facing; it reads MWELRSASF. A helical membrane pass occupies residues 10 to 29; sequence WRAIFAEFFATLFYVFFGLG. Over 30 to 41 the chain is Extracellular; the sequence is ASLRWAPGPLHV. Residues 42–59 traverse the membrane as a helical segment; the sequence is LQVALAFGLALATLVQAV. At 60–61 the chain is on the cytoplasmic side; the sequence is GH. Residues 62–77 constitute an intramembrane region (discontinuously helical); the sequence is ISGAHVNPAVTFAFLV. The NPA 1 motif lies at 68 to 70; it reads NPA. Residues 78 to 82 lie on the Cytoplasmic side of the membrane; it reads GSQMS. Residues 83 to 106 form a helical membrane-spanning segment; it reads LLRAICYMAAQLLGAVAGAAVLYS. The Extracellular segment spans residues 107 to 127; sequence VTPAAVRGNLALNTLHPGVSL. Residues 128-148 traverse the membrane as a helical segment; it reads GQATTVEIFLTLQFVLCIFAT. Over 149 to 156 the chain is Cytoplasmic; that stretch reads YDERRNGR. The chain crosses the membrane as a helical span at residues 157–175; the sequence is LGSVALAVGFSLTLGHLFG. The Extracellular segment spans residues 176–178; sequence MYY. The discontinuously helical intramembrane region spans 179-193; that stretch reads TGAGMNPARSFAPAI. The short motif at 184-186 is the NPA 2 element; sequence NPA. Residues 194–200 lie on the Extracellular side of the membrane; it reads LTRNFTN. A helical transmembrane segment spans residues 201 to 222; it reads HWVYWVGPIIGGGLASLLYDFL. The Cytoplasmic segment spans residues 223-263; the sequence is LFPRLKSVSERLSILKGARPSDSNGQPEGTGEPVELKTQAL. The interaction with CALM stretch occupies residues 227-237; that stretch reads LKSVSERLSIL. Ser235, Ser243, and Ser245 each carry phosphoserine. Positions 240-263 are disordered; the sequence is ARPSDSNGQPEGTGEPVELKTQAL. Asn246 is subject to Deamidated asparagine.

It belongs to the MIP/aquaporin (TC 1.A.8) family. Homotetramer; each monomer provides an independent water pore. Two homotetramers on opposing membranes can dimerize, forming a cell-cell junction. Interacts with CALM; the calcium-calmodulin/CALM complex interacts with the cytoplasmic domains of two aquaporins, leading to channel closure. Interacts with BFSP1 (via C-terminus); prevents calcium-dependent inhibition of the water channel activity. Post-translationally, subject to partial proteolytic cleavage in the eye lens core. Partial proteolysis promotes interactions between tetramers from adjoining membranes. In terms of processing, fatty acylated at Met-1 and Lys-238. The acyl modifications, in decreasing order of ion abundance, are: oleoyl (C18:1) &gt; palmitoyl (C16:0) &gt; stearoyl (C18:0) &gt; eicosenoyl (C20:1) &gt; dihomo-gamma-linolenoyl (C20:3) &gt; palmitoleoyl (C16:1) &gt; eicosadienoyl (C20:2).

The protein resides in the cell membrane. Its subcellular location is the cell junction. It catalyses the reaction H2O(in) = H2O(out). The water channel activity is inhibited by calcium through calmodulin/CALM. In terms of biological role, aquaporins form homotetrameric transmembrane channels, with each monomer independently mediating water transport across the plasma membrane along its osmotic gradient. Specifically expressed in lens fiber cells, this aquaporin is crucial for maintaining lens water homeostasis and transparency. Beyond water permeability, it also acts as a cell-to-cell adhesion molecule, forming thin junctions between lens fiber cells that are essential for maintaining the ordered structure and transparency of the lens. The sequence is that of Lens fiber major intrinsic protein from Oryctolagus cuniculus (Rabbit).